The primary structure comprises 892 residues: MDHYDSQQTNDYMQPEEDWDRDLLLDPAWEKQQRKTFTAWCNSHLRKAGTQIENIEEDFRDGLKLMLLLEVISGERLAKPERGKMRVHKISNVNKALDFIASKGVKLVSIGAEEIVDGNVKMTLGMIWTIILRFAIQDISVEETSAKEGLLLWCQRKTAPYKNVNIQNFHISWKDGLGFCALIHRHRPELIDYGKLRKDDPLTNLNTAFDVAERFLDIPKMLDAEDIVGTARPDEKAIMTYVSSFYHAFSGAQKAETAANRICKVLAVNQENEQLMEDYEKLASDLLEWIRRTIPWLENRVPENTMHAMQQKLEDFRDYRRLHKPPKVQEKCQLEINFNTLQTKLRLSNRPAFMPSEGRMVSDINNAWGCLEQAEKGYEEWLLNEIRRLERLDHLAEKFRQKASIHEAWTDGKEAMLRQKDYETATLSEIKALLKKHEAFESDLAAHQDRVEQIAAIAQELNELDYYDSPSVNARCQKICDQWDNLGALTQKRREALERTEKLLETIDQLYLEYAKRAAPFNNWMEGAMEDLQDTFIVHTIEEIQGLTTAHEQFKATLPDADKERLAILGIHNEVSKIVQTYHVNMAGTNPYTTITPQEINGKWDHVRQLVPRRDQALTEEHARQQHNERLRKQFGAQANVIGPWIQTKMEEIGRISIEMHGTLEDQLSHLRQYEKSIVNYKPKIDQLECDHQLIQEALIFDNKHTNYNMEHIRVGWEQLLTTIARTINEVENQILTRDAKGISQEQMNEFRASFNHFDRDHSGTLGPEEFKACLISLGYDIGNDPQGEAEFARIMSIVDPNRLGVVTFQAFIDFMSRETADTDTADQVMASFKILAGDKNYITEDELRRELPPDQAEYCIARMAPYAGPDSVPGALDYMSFSTALYGESDL.

M1 is modified (N-acetylmethionine). The tract at residues 1 to 247 is actin-binding; that stretch reads MDHYDSQQTN…IMTYVSSFYH (247 aa). The residue at position 6 (S6) is a Phosphoserine. Y12 carries the phosphotyrosine; by FAK1 modification. Calponin-homology (CH) domains follow at residues 31–135 and 144–250; these read KQQR…LRFA and TSAK…HAFS. 2 positions are modified to N6-acetyllysine: K95 and K195. Spectrin repeat units follow at residues 274 to 384, 394 to 499, 509 to 620, and 630 to 733; these read QLME…WLLN, HLAE…ALER, QLYL…ALTE, and RLRK…EVEN. The interval 274-733 is interaction with DDN; it reads QLMEDYEKLA…IARTINEVEN (460 aa). The residue at position 471 (S471) is a Phosphoserine. At K676 the chain carries N6-acetyllysine. The residue at position 677 (S677) is a Phosphoserine. 2 EF-hand domains span residues 746 to 781 and 787 to 822; these read EQMNEFRASFNHFDRDHSGTLGPEEFKACLISLGYD and QGEAEFARIMSIVDPNRLGVVTFQAFIDFMSRETAD. Positions 759, 761, 763, 765, and 770 each coordinate Ca(2+). S890 is subject to Phosphoserine.

The protein belongs to the alpha-actinin family. In terms of assembly, homodimer; antiparallel. Interacts with MYOZ2, TTID and LPP. Interacts with DDN. Interacts with PSD. Interacts with MICALL2. Interacts with DNM2 and CTTN. Interacts with PDLIM1. Interacts with PDLIM2. Interacts with PDLIM4 (via PDZ domain). Interacts with IGSF8.

Its subcellular location is the cytoplasm. The protein resides in the cytoskeleton. The protein localises to the myofibril. It localises to the sarcomere. It is found in the z line. Its subcellular location is the cell membrane. The protein resides in the cell junction. The protein localises to the cell projection. It localises to the ruffle. F-actin cross-linking protein which is thought to anchor actin to a variety of intracellular structures. Association with IGSF8 regulates the immune synapse formation and is required for efficient T-cell activation. This Mus musculus (Mouse) protein is Alpha-actinin-1 (Actn1).